The chain runs to 407 residues: ATP-citrate synthase subunit alpha chain protein 1 (407 aa).

Asparagine 327, threonine 329, and arginine 360 together coordinate citrate.

The protein belongs to the succinate/malate CoA ligase beta subunit family. In terms of assembly, heterooctamer of 4 alpha and 4 beta chains.

Its subcellular location is the cytoplasm. It localises to the cytosol. The enzyme catalyses oxaloacetate + acetyl-CoA + ADP + phosphate = citrate + ATP + CoA. Its function is as follows. ATP citrate-lyase is the primary enzyme responsible for the synthesis of cytosolic acetyl-CoA, used for the elongation of fatty acids and biosynthesis of isoprenoids, flavonoids and malonated derivatives. May supply substrate to the cytosolic acetyl-CoA carboxylase, which generates the malonyl-CoA used for the synthesis of a multitude of compounds, including very long chain fatty acids and flavonoids. In contrast to all known animal ACL enzymes having a homomeric structure, plant ACLs are composed of alpha and beta chains. This Oryza sativa subsp. japonica (Rice) protein is ATP-citrate synthase subunit alpha chain protein 1 (ACLA-1).